We begin with the raw amino-acid sequence, 353 residues long: Quinolinate synthase (353 aa).

H47 and S68 together coordinate iminosuccinate. Residue C113 participates in [4Fe-4S] cluster binding. Iminosuccinate-binding positions include 139–141 and S156; that span reads YAN. Position 200 (C200) interacts with [4Fe-4S] cluster. Residues 226–228 and T243 contribute to the iminosuccinate site; that span reads HPE. C297 is a binding site for [4Fe-4S] cluster.

It belongs to the quinolinate synthase family. Type 1 subfamily. Requires [4Fe-4S] cluster as cofactor.

The protein resides in the cytoplasm. The catalysed reaction is iminosuccinate + dihydroxyacetone phosphate = quinolinate + phosphate + 2 H2O + H(+). It functions in the pathway cofactor biosynthesis; NAD(+) biosynthesis; quinolinate from iminoaspartate: step 1/1. Functionally, catalyzes the condensation of iminoaspartate with dihydroxyacetone phosphate to form quinolinate. This Photobacterium profundum (strain SS9) protein is Quinolinate synthase.